The following is a 73-amino-acid chain: Venom peptide La1 (73 aa).

Lysine amide is present on Lys-73.

This sequence belongs to the scorpion La1-like peptide family. Contains 4 disulfide bonds. In terms of tissue distribution, expressed by the venom gland.

The protein resides in the secreted. Not toxic to insect. This chain is Venom peptide La1, found in Liocheles australasiae (Dwarf wood scorpion).